A 363-amino-acid polypeptide reads, in one-letter code: Oxygen-dependent coproporphyrinogen-III oxidase (363 aa).

S119 lines the substrate pocket. The a divalent metal cation site is built by H123 and H133. The Proton donor role is filled by H133. 135-137 (NYR) is a substrate binding site. A divalent metal cation contacts are provided by H167 and H197. The important for dimerization stretch occupies residues 287-322 (YVEFNLVWDRGTIFGLQTNGRTESILMSLPPLVRWE).

Belongs to the aerobic coproporphyrinogen-III oxidase family. In terms of assembly, homodimer. A divalent metal cation is required as a cofactor.

The protein resides in the cytoplasm. The enzyme catalyses coproporphyrinogen III + O2 + 2 H(+) = protoporphyrinogen IX + 2 CO2 + 2 H2O. It participates in porphyrin-containing compound metabolism; protoporphyrin-IX biosynthesis; protoporphyrinogen-IX from coproporphyrinogen-III (O2 route): step 1/1. Its function is as follows. Involved in the heme and chlorophyll biosynthesis. Catalyzes the aerobic oxidative decarboxylation of propionate groups of rings A and B of coproporphyrinogen-III to yield the vinyl groups in protoporphyrinogen-IX. This Parasynechococcus marenigrum (strain WH8102) protein is Oxygen-dependent coproporphyrinogen-III oxidase.